We begin with the raw amino-acid sequence, 430 residues long: Adenylosuccinate synthetase (430 aa).

GTP-binding positions include 12–18 and 40–42; these read GDEGKGK and GHT. The Proton acceptor role is filled by aspartate 13. Mg(2+) is bound by residues aspartate 13 and glycine 40. Residues 13-16, 38-41, threonine 128, arginine 142, glutamine 223, threonine 238, and arginine 302 each bind IMP; these read DEGK and NAGH. Histidine 41 functions as the Proton donor in the catalytic mechanism. 298-304 is a substrate binding site; the sequence is TVTKRPR. GTP is bound by residues arginine 304, 330 to 332, and 412 to 414; these read CVD and SVG.

It belongs to the adenylosuccinate synthetase family. In terms of assembly, homodimer. Mg(2+) is required as a cofactor.

It is found in the cytoplasm. It carries out the reaction IMP + L-aspartate + GTP = N(6)-(1,2-dicarboxyethyl)-AMP + GDP + phosphate + 2 H(+). Its pathway is purine metabolism; AMP biosynthesis via de novo pathway; AMP from IMP: step 1/2. In terms of biological role, plays an important role in the de novo pathway of purine nucleotide biosynthesis. Catalyzes the first committed step in the biosynthesis of AMP from IMP. This chain is Adenylosuccinate synthetase, found in Ligilactobacillus salivarius (strain UCC118) (Lactobacillus salivarius).